Reading from the N-terminus, the 729-residue chain is Fatty acid oxidation complex subunit alpha (729 aa).

The segment at 1-189 is enoyl-CoA hydratase/isomerase; sequence MLYQSETLQL…KIGLVDAVVD (189 aa). Aspartate 296 lines the substrate pocket. The segment at 311–729 is 3-hydroxyacyl-CoA dehydrogenase; the sequence is AAPKLAAVLG…LLDVSTNQPA (419 aa). NAD(+) is bound by residues methionine 324, aspartate 343, 400–402, lysine 407, and serine 429; that span reads VVE. Histidine 450 serves as the catalytic For 3-hydroxyacyl-CoA dehydrogenase activity. Asparagine 453 lines the NAD(+) pocket. The substrate site is built by asparagine 500 and tyrosine 660.

This sequence in the N-terminal section; belongs to the enoyl-CoA hydratase/isomerase family. The protein in the C-terminal section; belongs to the 3-hydroxyacyl-CoA dehydrogenase family. As to quaternary structure, heterotetramer of two alpha chains (FadB) and two beta chains (FadA).

The catalysed reaction is a (3S)-3-hydroxyacyl-CoA + NAD(+) = a 3-oxoacyl-CoA + NADH + H(+). It carries out the reaction a (3S)-3-hydroxyacyl-CoA = a (2E)-enoyl-CoA + H2O. It catalyses the reaction a 4-saturated-(3S)-3-hydroxyacyl-CoA = a (3E)-enoyl-CoA + H2O. The enzyme catalyses (3S)-3-hydroxybutanoyl-CoA = (3R)-3-hydroxybutanoyl-CoA. The catalysed reaction is a (3Z)-enoyl-CoA = a 4-saturated (2E)-enoyl-CoA. It carries out the reaction a (3E)-enoyl-CoA = a 4-saturated (2E)-enoyl-CoA. It functions in the pathway lipid metabolism; fatty acid beta-oxidation. Functionally, involved in the aerobic and anaerobic degradation of long-chain fatty acids via beta-oxidation cycle. Catalyzes the formation of 3-oxoacyl-CoA from enoyl-CoA via L-3-hydroxyacyl-CoA. It can also use D-3-hydroxyacyl-CoA and cis-3-enoyl-CoA as substrate. This Yersinia pseudotuberculosis serotype O:1b (strain IP 31758) protein is Fatty acid oxidation complex subunit alpha.